A 308-amino-acid polypeptide reads, in one-letter code: Testis-specific Y-encoded protein 3 (308 aa).

It belongs to the nucleosome assembly protein (NAP) family.

Its subcellular location is the cytoplasm. It is found in the nucleus. May be involved in sperm differentiation and proliferation. This Homo sapiens (Human) protein is Testis-specific Y-encoded protein 3 (TSPY3).